A 676-amino-acid chain; its full sequence is Ribonuclease R (676 aa).

An RNB domain is found at 207–527 (RKDLRDLLCF…LIVHRLLFNP (321 aa)). Residues 566–651 (NKFLQEQPKT…LTQKIVWSIA (86 aa)) form the S1 motif domain. Residues 656-676 (DKPKKIKKTPSKKKGTKKRAS) form a disordered region. Residues 659 to 676 (KKIKKTPSKKKGTKKRAS) show a composition bias toward basic residues.

This sequence belongs to the RNR ribonuclease family. RNase R subfamily.

The protein resides in the cytoplasm. The catalysed reaction is Exonucleolytic cleavage in the 3'- to 5'-direction to yield nucleoside 5'-phosphates.. Its function is as follows. 3'-5' exoribonuclease that releases 5'-nucleoside monophosphates and is involved in maturation of structured RNAs. The polypeptide is Ribonuclease R (Chlamydia pneumoniae (Chlamydophila pneumoniae)).